A 331-amino-acid chain; its full sequence is MAEADTERRPHIPVLLRPLLAAVAPVEGTWLDGTFGAGGYARGLLEAGADRVIGVDRDPLALKMASGWAGDYGDRLRLVAGTFSQLDSHAGAPLDGVVLDLGVSSMQLDLAERGFSFQKDGPLDMRMSQEGESAADLVNTASEETLADILYHYGEERASRRIARAIVEARAAAPITRTLALAEIVARCLPRPKPGQMHPATRSFQAIRIAVNAEFSELVEGLEAAERALRPGGRLAVVTFHSLEDRIVKRFLQLRSGGEGQGNRYAPETRADAPRFTLPLRRAISPDEAELAENPRARSARLRVGVRTDAPAGKVDPQALGTPLIPKKGRR.

Residues 38–40, Asp-56, Phe-83, Asp-100, and Gln-107 contribute to the S-adenosyl-L-methionine site; that span reads GGY. Residues 287 to 331 form a disordered region; that stretch reads DEAELAENPRARSARLRVGVRTDAPAGKVDPQALGTPLIPKKGRR.

Belongs to the methyltransferase superfamily. RsmH family.

Its subcellular location is the cytoplasm. It catalyses the reaction cytidine(1402) in 16S rRNA + S-adenosyl-L-methionine = N(4)-methylcytidine(1402) in 16S rRNA + S-adenosyl-L-homocysteine + H(+). Specifically methylates the N4 position of cytidine in position 1402 (C1402) of 16S rRNA. The protein is Ribosomal RNA small subunit methyltransferase H of Cereibacter sphaeroides (strain ATCC 17023 / DSM 158 / JCM 6121 / CCUG 31486 / LMG 2827 / NBRC 12203 / NCIMB 8253 / ATH 2.4.1.) (Rhodobacter sphaeroides).